We begin with the raw amino-acid sequence, 418 residues long: 1-deoxy-D-xylulose 5-phosphate reductoisomerase (418 aa).

Residues T32, G33, S34, I35, and N150 each contribute to the NADPH site. K151 contacts 1-deoxy-D-xylulose 5-phosphate. E152 is an NADPH binding site. A Mn(2+)-binding site is contributed by D174. 1-deoxy-D-xylulose 5-phosphate contacts are provided by S175, E176, S200, and H223. A Mn(2+)-binding site is contributed by E176. Residue G229 participates in NADPH binding. S236, N241, K242, and E245 together coordinate 1-deoxy-D-xylulose 5-phosphate. E245 contributes to the Mn(2+) binding site.

The protein belongs to the DXR family. Mg(2+) serves as cofactor. Mn(2+) is required as a cofactor.

It carries out the reaction 2-C-methyl-D-erythritol 4-phosphate + NADP(+) = 1-deoxy-D-xylulose 5-phosphate + NADPH + H(+). It functions in the pathway isoprenoid biosynthesis; isopentenyl diphosphate biosynthesis via DXP pathway; isopentenyl diphosphate from 1-deoxy-D-xylulose 5-phosphate: step 1/6. In terms of biological role, catalyzes the NADPH-dependent rearrangement and reduction of 1-deoxy-D-xylulose-5-phosphate (DXP) to 2-C-methyl-D-erythritol 4-phosphate (MEP). This is 1-deoxy-D-xylulose 5-phosphate reductoisomerase from Streptomyces coelicolor (strain ATCC BAA-471 / A3(2) / M145).